The following is a 471-amino-acid chain: Argininosuccinate lyase (471 aa).

This sequence belongs to the lyase 1 family. Argininosuccinate lyase subfamily.

It localises to the cytoplasm. The enzyme catalyses 2-(N(omega)-L-arginino)succinate = fumarate + L-arginine. Its pathway is amino-acid biosynthesis; L-arginine biosynthesis; L-arginine from L-ornithine and carbamoyl phosphate: step 3/3. This chain is Argininosuccinate lyase, found in Parasynechococcus marenigrum (strain WH8102).